A 475-amino-acid chain; its full sequence is Ribulose bisphosphate carboxylase large chain (475 aa).

Positions 1-2 (MS) are excised as a propeptide. The residue at position 3 (Pro-3) is an N-acetylproline. Lys-14 carries the post-translational modification N6,N6,N6-trimethyllysine. Substrate contacts are provided by Asn-123 and Thr-173. Residue Lys-175 is the Proton acceptor of the active site. Lys-177 is a substrate binding site. The Mg(2+) site is built by Lys-201, Asp-203, and Glu-204. N6-carboxylysine is present on Lys-201. His-294 (proton acceptor) is an active-site residue. Positions 295, 327, and 379 each coordinate substrate.

The protein belongs to the RuBisCO large chain family. Type I subfamily. In terms of assembly, heterohexadecamer of 8 large chains and 8 small chains; disulfide-linked. The disulfide link is formed within the large subunit homodimers. The cofactor is Mg(2+). The disulfide bond which can form in the large chain dimeric partners within the hexadecamer appears to be associated with oxidative stress and protein turnover.

It is found in the plastid. The protein localises to the chloroplast. The enzyme catalyses 2 (2R)-3-phosphoglycerate + 2 H(+) = D-ribulose 1,5-bisphosphate + CO2 + H2O. The catalysed reaction is D-ribulose 1,5-bisphosphate + O2 = 2-phosphoglycolate + (2R)-3-phosphoglycerate + 2 H(+). In terms of biological role, ruBisCO catalyzes two reactions: the carboxylation of D-ribulose 1,5-bisphosphate, the primary event in carbon dioxide fixation, as well as the oxidative fragmentation of the pentose substrate in the photorespiration process. Both reactions occur simultaneously and in competition at the same active site. This Chara vulgaris (Common stonewort) protein is Ribulose bisphosphate carboxylase large chain.